A 361-amino-acid chain; its full sequence is Chorismate synthase (361 aa).

NADP(+)-binding residues include Arg-48 and Arg-54. FMN-binding positions include 125-127, 238-239, Gly-278, 293-297, and Arg-319; these read RSS, NA, and KPTSS.

The protein belongs to the chorismate synthase family. Homotetramer. FMNH2 is required as a cofactor.

The enzyme catalyses 5-O-(1-carboxyvinyl)-3-phosphoshikimate = chorismate + phosphate. It functions in the pathway metabolic intermediate biosynthesis; chorismate biosynthesis; chorismate from D-erythrose 4-phosphate and phosphoenolpyruvate: step 7/7. Functionally, catalyzes the anti-1,4-elimination of the C-3 phosphate and the C-6 proR hydrogen from 5-enolpyruvylshikimate-3-phosphate (EPSP) to yield chorismate, which is the branch point compound that serves as the starting substrate for the three terminal pathways of aromatic amino acid biosynthesis. This reaction introduces a second double bond into the aromatic ring system. This Escherichia coli O7:K1 (strain IAI39 / ExPEC) protein is Chorismate synthase.